A 418-amino-acid polypeptide reads, in one-letter code: Gamma-glutamyl phosphate reductase (418 aa).

The segment covering 1 to 18 has biased composition (basic and acidic residues); that stretch reads MAIQDEMRQVAEGAREAS. The segment at 1–22 is disordered; that stretch reads MAIQDEMRQVAEGAREASRTLS.

It belongs to the gamma-glutamyl phosphate reductase family.

It localises to the cytoplasm. The enzyme catalyses L-glutamate 5-semialdehyde + phosphate + NADP(+) = L-glutamyl 5-phosphate + NADPH + H(+). It functions in the pathway amino-acid biosynthesis; L-proline biosynthesis; L-glutamate 5-semialdehyde from L-glutamate: step 2/2. Functionally, catalyzes the NADPH-dependent reduction of L-glutamate 5-phosphate into L-glutamate 5-semialdehyde and phosphate. The product spontaneously undergoes cyclization to form 1-pyrroline-5-carboxylate. In Syntrophus aciditrophicus (strain SB), this protein is Gamma-glutamyl phosphate reductase.